A 231-amino-acid polypeptide reads, in one-letter code: 5'-methylthioadenosine/S-adenosylhomocysteine nucleosidase (231 aa).

The active-site Proton acceptor is Glu12. Residues Gly78, Met153, and 174-175 each bind substrate; that span reads ME. Asp198 acts as the Proton donor in catalysis.

This sequence belongs to the PNP/UDP phosphorylase family. MtnN subfamily.

It catalyses the reaction S-adenosyl-L-homocysteine + H2O = S-(5-deoxy-D-ribos-5-yl)-L-homocysteine + adenine. It carries out the reaction S-methyl-5'-thioadenosine + H2O = 5-(methylsulfanyl)-D-ribose + adenine. The catalysed reaction is 5'-deoxyadenosine + H2O = 5-deoxy-D-ribose + adenine. Its pathway is amino-acid biosynthesis; L-methionine biosynthesis via salvage pathway; S-methyl-5-thio-alpha-D-ribose 1-phosphate from S-methyl-5'-thioadenosine (hydrolase route): step 1/2. Its function is as follows. Catalyzes the irreversible cleavage of the glycosidic bond in both 5'-methylthioadenosine (MTA) and S-adenosylhomocysteine (SAH/AdoHcy) to adenine and the corresponding thioribose, 5'-methylthioribose and S-ribosylhomocysteine, respectively. Also cleaves 5'-deoxyadenosine, a toxic by-product of radical S-adenosylmethionine (SAM) enzymes, into 5-deoxyribose and adenine. The protein is 5'-methylthioadenosine/S-adenosylhomocysteine nucleosidase of Bacillus cytotoxicus (strain DSM 22905 / CIP 110041 / 391-98 / NVH 391-98).